The following is a 307-amino-acid chain: MFFKVCQLGKGRCCQVLLNYASCQRCQLSSYKGTPRLIKAVQGSSKDQQLAGQVQRFGEDSWFVHSAPKSETMGVADGVGGWRQMGIDSGVFAKQLMTNCSKLSEQADYDGRNPRQLLIDGYHRLKEHATNVWGSSTACLVSLHRSDCTLHSANLGDSGFLVLRHGKVLHRSDEQLHVFNTPYQLSVPPTSQMHKVLSDQPEEAICTQLGLQQGDLVLVATDGLFDNVVESELVQQLQQLHGETRVEKVQLAANRLVDLAKRLSLRTDYQSPFALRAKANNMNYGAGGKPDDITVILASVEVSQRSN.

The PPM-type phosphatase domain occupies 41–300; the sequence is VQGSSKDQQL…DDITVILASV (260 aa). Asp-77, Gly-78, and Asp-222 together coordinate Mn(2+).

Belongs to the PP2C family. Mg(2+) is required as a cofactor. It depends on Mn(2+) as a cofactor.

It catalyses the reaction O-phospho-L-seryl-[protein] + H2O = L-seryl-[protein] + phosphate. It carries out the reaction O-phospho-L-threonyl-[protein] + H2O = L-threonyl-[protein] + phosphate. This Drosophila grimshawi (Hawaiian fruit fly) protein is Protein phosphatase PTC7 homolog fig.